The sequence spans 531 residues: 2-isopropylmalate synthase (531 aa).

Residues 8-284 (IIIFDTTLRD…LTNIDTKQIY (277 aa)) enclose the Pyruvate carboxyltransferase domain. 4 residues coordinate Mn(2+): aspartate 17, histidine 208, histidine 210, and asparagine 244. Residues 408-531 (RVELVQVSCG…TQDKQTEVTA (124 aa)) are regulatory domain.

It belongs to the alpha-IPM synthase/homocitrate synthase family. LeuA type 1 subfamily. As to quaternary structure, homodimer. The cofactor is Mn(2+).

The protein resides in the cytoplasm. The enzyme catalyses 3-methyl-2-oxobutanoate + acetyl-CoA + H2O = (2S)-2-isopropylmalate + CoA + H(+). The protein operates within amino-acid biosynthesis; L-leucine biosynthesis; L-leucine from 3-methyl-2-oxobutanoate: step 1/4. Catalyzes the condensation of the acetyl group of acetyl-CoA with 3-methyl-2-oxobutanoate (2-ketoisovalerate) to form 3-carboxy-3-hydroxy-4-methylpentanoate (2-isopropylmalate). The protein is 2-isopropylmalate synthase of Trichormus variabilis (strain ATCC 29413 / PCC 7937) (Anabaena variabilis).